The following is a 914-amino-acid chain: Sensor protein TorS (914 aa).

Topologically, residues 1–8 (MNLTLTRR) are cytoplasmic. The chain crosses the membrane as a helical span at residues 9-29 (LWMGFALMALLTLTSTLVGWY). The Periplasmic portion of the chain corresponds to 30-332 (NLRFISQVEK…EKASARGQYS (303 aa)). The chain crosses the membrane as a helical span at residues 333 to 353 (LLLLGMVSLCALILILWRVVY). One can recognise an HAMP domain in the interval 354-407 (RSVTRPLAEQTQALQRLLDGDIDSPFPETAGVRELDTIGRLMDAFRSNVHALNR). Residues 354-914 (RSVTRPLAEQ…WLHKKDLNAI (561 aa)) lie on the Cytoplasmic side of the membrane. Positions 450 to 664 (AMSHEIRTPL…CFCLRLPLRV (215 aa)) constitute a Histidine kinase domain. Residue His453 is modified to Phosphohistidine; by autocatalysis. A Response regulatory domain is found at 683–798 (RLLLIEDNPL…VLGQLLAHYL (116 aa)). Residue Asp733 is modified to 4-aspartylphosphate. The HPt domain occupies 821–914 (GTEKIHEWLV…WLHKKDLNAI (94 aa)). Position 860 is a phosphohistidine (His860).

May form homomultimers. Seems to interact with TorT and TorC apocytochrome. Activation requires a sequential transfer of a phosphate group from a His in the primary transmitter domain, to an Asp in the receiver domain and to a His in the secondary transmitter domain.

The protein localises to the cell inner membrane. The enzyme catalyses ATP + protein L-histidine = ADP + protein N-phospho-L-histidine.. Its activity is regulated as follows. Inhibited by TorC apocytochrome. Its function is as follows. Member of the two-component regulatory system TorS/TorR involved in the anaerobic utilization of trimethylamine-N-oxide (TMAO). Detects the presence of TMAO in the medium and, in response, activates TorR via a four-step phosphorelay. When TMAO is removed, TorS can dephosphorylate TorR, probably by a reverse phosphorelay involving His-860 and Asp-733. This chain is Sensor protein TorS (torS), found in Escherichia coli (strain K12).